Here is a 196-residue protein sequence, read N- to C-terminus: Dehydrogenase RED3 (196 aa).

Positions 47, 74, 101, 134, 166, and 170 each coordinate NADP(+). The active-site Proton acceptor is Y166. K170 functions as the Lowers pKa of active site Tyr in the catalytic mechanism.

This sequence belongs to the short-chain dehydrogenases/reductases (SDR) family.

The catalysed reaction is a primary alcohol + NAD(+) = an aldehyde + NADH + H(+). The enzyme catalyses a secondary alcohol + NAD(+) = a ketone + NADH + H(+). It functions in the pathway mycotoxin biosynthesis. Functionally, dehydrogenase; part of the Tox1B locus, one of the 2 loci that mediate the biosynthesis of T-toxin, a family of linear polyketides 37 to 45 carbons in length, of which the major component is 41 carbons, and which leads to high virulence to maize. One of the PKSs (PKS1 or PKS2) could synthesize a precursor, used subsequently by the other PKS as starter unit, to add additional carbons. Variability in the length of the final carbon backbone C35-47 could be achieved by varying the number of condensation cycles, or use of different starter or extender units or might be due to decarboxylation of the penultimate product, catalyzed by DEC1. Additional proteins are required for the biosynthesis of T-toxin, including oxidoreductases RED1, RED2, RED3, LAM1 and OXI1, as well as esterase TOX9. The sequence is that of Dehydrogenase RED3 from Cochliobolus heterostrophus (strain C4 / ATCC 48331 / race T) (Southern corn leaf blight fungus).